The chain runs to 185 residues: Threonylcarbamoyl-AMP synthase (185 aa).

One can recognise a YrdC-like domain in the interval 4 to 185; sequence SFRVQQAARE…LATGEVVRPG (182 aa).

This sequence belongs to the SUA5 family. TsaC subfamily.

Its subcellular location is the cytoplasm. It carries out the reaction L-threonine + hydrogencarbonate + ATP = L-threonylcarbamoyladenylate + diphosphate + H2O. Required for the formation of a threonylcarbamoyl group on adenosine at position 37 (t(6)A37) in tRNAs that read codons beginning with adenine. Catalyzes the conversion of L-threonine, HCO(3)(-)/CO(2) and ATP to give threonylcarbamoyl-AMP (TC-AMP) as the acyladenylate intermediate, with the release of diphosphate. This is Threonylcarbamoyl-AMP synthase from Pseudomonas putida (strain ATCC 47054 / DSM 6125 / CFBP 8728 / NCIMB 11950 / KT2440).